Reading from the N-terminus, the 446-residue chain is Transcriptional adapter 2-alpha (446 aa).

The ZZ-type zinc finger occupies 12-69 (FDKPPCRGCSSYLTEPYVKCAECGPPPFLLCLQCFTRGFEYKKHQSDHTYEIMTSDFP). Residues cysteine 17, cysteine 20, cysteine 31, cysteine 34, cysteine 42, cysteine 45, histidine 55, and histidine 59 each coordinate Zn(2+). An SANT domain is found at 70–122 (VLDPNWTAQEEMALLEAVMDCGFGNWQDVANQMCTKSKEECEKHYMKHFINNP). The tract at residues 345-375 (DIDSGPTPAAPIPSNSGRRSAPPLNLTGLPG) is disordered. One can recognise an SWIRM domain in the interval 359–446 (NSGRRSAPPL…LIREGYITKA (88 aa)). A DNA-binding region spans residues 429–438 (KTRKIYDFLI).

Its subcellular location is the nucleus. It is found in the chromosome. In terms of biological role, component of some complex with histone acetyltransferase activity. Required for the function of some acidic activation domains, which activate transcription from a distant site. Binds double-stranded DNA. Binds dinucleosomes, probably at the linker region between neighboring nucleosomes. Plays a role in chromatin remodeling. The protein is Transcriptional adapter 2-alpha (TADA2A) of Gallus gallus (Chicken).